The chain runs to 364 residues: Oxidized polyvinyl alcohol hydrolase (364 aa).

Residues 1-34 (MFKPVVKSRSSRSFCYLAGCLAMVAATLSSTAQA) form the signal peptide. Residues Ser-190 and Ser-293 each act as charge relay system in the active site.

This sequence belongs to the peptidase S9A family. Monomer.

Its subcellular location is the periplasm. The catalysed reaction is nonane-4,6-dione + H2O = pentan-2-one + butanoate + H(+). Catalyzes the hydrolysis of 4,6-nonanedione, a beta-diketone compound. Also mediates hydrolysis of oxidized polyvinyl alcohol (PVA) in the second step in the degradation of polyvinyl alcohol. Not active toward the monoketone structure. The protein is Oxidized polyvinyl alcohol hydrolase (oph) of Sphingopyxis sp. (strain 113P3).